The following is a 407-amino-acid chain: Formate-dependent phosphoribosylglycinamide formyltransferase (407 aa).

N(1)-(5-phospho-beta-D-ribosyl)glycinamide contacts are provided by residues 28–29 (EL) and E88. ATP is bound by residues R121, K162, 167-172 (SSGKGQ), 202-205 (EGFI), and E210. An ATP-grasp domain is found at 126-320 (RLAAEELGVA…EFELHAKAIL (195 aa)). 2 residues coordinate Mg(2+): E279 and E291. N(1)-(5-phospho-beta-D-ribosyl)glycinamide contacts are provided by residues D298, K367, and 374–375 (RR).

It belongs to the PurK/PurT family. Homodimer.

It carries out the reaction N(1)-(5-phospho-beta-D-ribosyl)glycinamide + formate + ATP = N(2)-formyl-N(1)-(5-phospho-beta-D-ribosyl)glycinamide + ADP + phosphate + H(+). Its pathway is purine metabolism; IMP biosynthesis via de novo pathway; N(2)-formyl-N(1)-(5-phospho-D-ribosyl)glycinamide from N(1)-(5-phospho-D-ribosyl)glycinamide (formate route): step 1/1. Functionally, involved in the de novo purine biosynthesis. Catalyzes the transfer of formate to 5-phospho-ribosyl-glycinamide (GAR), producing 5-phospho-ribosyl-N-formylglycinamide (FGAR). Formate is provided by PurU via hydrolysis of 10-formyl-tetrahydrofolate. The chain is Formate-dependent phosphoribosylglycinamide formyltransferase from Herminiimonas arsenicoxydans.